Reading from the N-terminus, the 104-residue chain is Pole-localizer protein TmaR (104 aa).

Coiled coils occupy residues 7–34 and 76–96; these read IVNQARRKNKLKRELLDNEKKVRDNRKR and SAEISKARRDISRRIRELTEE.

The protein belongs to the pole-localizer TmaR family.

It localises to the cytoplasm. Pole-localizer protein involved in the regulation of several cellular processes. In Vibrio campbellii (strain ATCC BAA-1116), this protein is Pole-localizer protein TmaR.